Consider the following 22-residue polypeptide: Magnificalysin II (22 aa).

A plays an important role in the hemolytic activity region spans residues 3 to 12 (ALAGTIIDGA). Positions 11–22 (GASLGFDILNKV) are N-terminal region.

This sequence belongs to the actinoporin family. Sea anemone subfamily. In terms of assembly, octamer or nonamer in membranes. Monomer in the soluble state.

The protein localises to the secreted. The protein resides in the nematocyst. Its subcellular location is the target cell membrane. Functionally, pore-forming protein that forms cations-selective hydrophilic pores of around 1 nm and causes cytolysis. Pore formation is a multi-step process that involves specific recognition of membrane sphingomyelin (but neither cholesterol nor phosphatidylcholine) using aromatic rich region and adjacent phosphocholine (POC) binding site, firm binding to the membrane (mainly driven by hydrophobic interactions) accompanied by the transfer of the N-terminal region to the lipid-water interface and finally pore formation after oligomerization of monomers. The protein is Magnificalysin II of Heteractis magnifica (Magnificent sea anemone).